Reading from the N-terminus, the 525-residue chain is Ankyrin repeat and SOCS box protein 3 (525 aa).

ANK repeat units lie at residues 9-38, 42-71, 78-107, 111-140, 145-174, 178-207, 211-240, 246-275, 279-308, 315-346, and 348-373; these read DTCSTVGLAAREGNVKVLRKLLKKGRSIDV, RGWMPIHEASYHNSVECLRMLIRADSSENY, EGFCALHLAASQGHWKIIQILLEAGADPNA, EETTPLFLAVENGQIDVLRLLLRYGANVNG, CGWNALHQASFQGNAEIIKLLLKKGANKEC, FGITPLFVAAQYGKLESLSILISSGADVNC, DKATPLFIAAQEGHTECVELLLSSGADPDL, NWQLPIHAAAQMGHTKILDLLIPLTNRVCD, NKVSPVYSAVLGGHEECLEMLLQSGYSPDA, GFSSPLCMAFQKDCDFFGIVNILLKYGAQLNE, and HLAYCLKYERFSVFRYFLKKCCPSTP. The SOCS box domain occupies 441-505; the sequence is MLSARASNSS…HDYLLYAEVL (65 aa).

It belongs to the ankyrin SOCS box (ASB) family. As to quaternary structure, interacts with ELOB and TNFRSF1B.

It functions in the pathway protein modification; protein ubiquitination. In terms of biological role, probable substrate-recognition component of a SCF-like ECS (Elongin-Cullin-SOCS-box protein) E3 ubiquitin-protein ligase complex which mediates the ubiquitination and subsequent proteasomal degradation of target proteins. Recognizes TNFRSF1B. This chain is Ankyrin repeat and SOCS box protein 3 (ASB3), found in Bos taurus (Bovine).